Consider the following 590-residue polypeptide: Potassium-transporting ATPase potassium-binding subunit (590 aa).

10 helical membrane passes run I11 to F31, T64 to I84, G136 to I156, I178 to V198, M273 to M293, W301 to A321, A403 to V423, A442 to L462, L511 to G531, and L552 to A572.

The protein belongs to the KdpA family. As to quaternary structure, the system is composed of three essential subunits: KdpA, KdpB and KdpC.

The protein localises to the cell inner membrane. Its function is as follows. Part of the high-affinity ATP-driven potassium transport (or Kdp) system, which catalyzes the hydrolysis of ATP coupled with the electrogenic transport of potassium into the cytoplasm. This subunit binds the periplasmic potassium ions and delivers the ions to the membrane domain of KdpB through an intramembrane tunnel. This Acidobacterium capsulatum (strain ATCC 51196 / DSM 11244 / BCRC 80197 / JCM 7670 / NBRC 15755 / NCIMB 13165 / 161) protein is Potassium-transporting ATPase potassium-binding subunit.